The sequence spans 194 residues: Imidazoleglycerol-phosphate dehydratase (194 aa).

This sequence belongs to the imidazoleglycerol-phosphate dehydratase family.

The protein localises to the cytoplasm. It catalyses the reaction D-erythro-1-(imidazol-4-yl)glycerol 3-phosphate = 3-(imidazol-4-yl)-2-oxopropyl phosphate + H2O. Its pathway is amino-acid biosynthesis; L-histidine biosynthesis; L-histidine from 5-phospho-alpha-D-ribose 1-diphosphate: step 6/9. This Bacillus thuringiensis (strain Al Hakam) protein is Imidazoleglycerol-phosphate dehydratase.